A 258-amino-acid chain; its full sequence is MSDLKAAALRALKLMDLTTLNDNDTDEAVIALCKNAKTAVGNTAAVCIYPRFIPIAKKTLREQGTPEVRIATVTNFPHGNDDIEIAVAETKAAVAYGADEVDVVFPYRALIAGDETTGFELVKQCKEACGDVLLKVIIETGELKEEALIKKASQICIEAGANFIKTSTGKVPVNATPEYARMMLEVIRDMDVAKTVGFKPAGGVRTAEDAQAYLAMADEILGDDWADNMHYRFGASSLLTNLLNTLEVTEETADPSAY.

Catalysis depends on aspartate 102, which acts as the Proton donor/acceptor. Lysine 165 acts as the Schiff-base intermediate with acetaldehyde in catalysis. The active-site Proton donor/acceptor is lysine 199.

This sequence belongs to the DeoC/FbaB aldolase family. DeoC type 2 subfamily.

The protein resides in the cytoplasm. It carries out the reaction 2-deoxy-D-ribose 5-phosphate = D-glyceraldehyde 3-phosphate + acetaldehyde. It participates in carbohydrate degradation; 2-deoxy-D-ribose 1-phosphate degradation; D-glyceraldehyde 3-phosphate and acetaldehyde from 2-deoxy-alpha-D-ribose 1-phosphate: step 2/2. Catalyzes a reversible aldol reaction between acetaldehyde and D-glyceraldehyde 3-phosphate to generate 2-deoxy-D-ribose 5-phosphate. The protein is Deoxyribose-phosphate aldolase of Aliivibrio fischeri (strain MJ11) (Vibrio fischeri).